The following is an 80-amino-acid chain: Conotoxin VnMSGL-0123 (80 aa).

The signal sequence occupies residues 1 to 20 (MSGLGIMVLTLLLLVSMATS). A propeptide spanning residues 21–44 (HQDGGGKQATQRDAINVRRRRSIT) is cleaved from the precursor. Intrachain disulfides connect Cys53–Cys65, Cys57–Cys74, and Cys64–Cys78. Phe79 bears the Phenylalanine amide mark.

Belongs to the conotoxin O3 superfamily. As to expression, expressed by the venom duct.

It localises to the secreted. This Conus ventricosus (Mediterranean cone) protein is Conotoxin VnMSGL-0123.